Reading from the N-terminus, the 120-residue chain is Immunoglobulin kappa variable 2D-28 (120 aa).

The N-terminal stretch at 1 to 19 (MRLPAQLLGLLMLWVSGSS) is a signal peptide. An Ig-like domain is found at 20–120 (GDIVMTQSPL…YYCMQALQTP (101 aa)). Residues 21–43 (DIVMTQSPLSLPVTPGEPASISC) are framework-1. The cysteines at positions 43 and 113 are disulfide-linked. The interval 44–59 (RSSQSLLHSNGYNYLD) is complementarity-determining-1. The framework-2 stretch occupies residues 60-74 (WYLQKPGQSPQLLIY). Residues 75 to 81 (LGSNRAS) are complementarity-determining-2. Residues 82–113 (GVPDRFSGSGSGTDFTLKISRVEAEDVGVYYC) are framework-3. Positions 114-120 (MQALQTP) are complementarity-determining-3.

As to quaternary structure, immunoglobulins are composed of two identical heavy chains and two identical light chains; disulfide-linked.

It is found in the secreted. It localises to the cell membrane. Its function is as follows. V region of the variable domain of immunoglobulin light chains that participates in the antigen recognition. Immunoglobulins, also known as antibodies, are membrane-bound or secreted glycoproteins produced by B lymphocytes. In the recognition phase of humoral immunity, the membrane-bound immunoglobulins serve as receptors which, upon binding of a specific antigen, trigger the clonal expansion and differentiation of B lymphocytes into immunoglobulins-secreting plasma cells. Secreted immunoglobulins mediate the effector phase of humoral immunity, which results in the elimination of bound antigens. The antigen binding site is formed by the variable domain of one heavy chain, together with that of its associated light chain. Thus, each immunoglobulin has two antigen binding sites with remarkable affinity for a particular antigen. The variable domains are assembled by a process called V-(D)-J rearrangement and can then be subjected to somatic hypermutations which, after exposure to antigen and selection, allow affinity maturation for a particular antigen. The chain is Immunoglobulin kappa variable 2D-28 from Homo sapiens (Human).